The sequence spans 75 residues: uncharacterized protein (75 aa).

Residues 1-25 (MSLFYRAVALGTLSALVWYSTSILA) form the signal peptide. The chain crosses the membrane as a helical span at residues 55 to 75 (YRALLAFSLVICGTLLVTCVI).

Its subcellular location is the host endoplasmic reticulum membrane. Its function is as follows. Plays a role in the down-regulation of the host NKG2D ligand MICA by targeting ER-resident MICA to proteasomal degradation prior to the GPI-anchoring step. In turn, MICA reduction diminishes NK-cell killing of HCMV-infected cells. This is an uncharacterized protein from Homo sapiens (Human).